Here is a 248-residue protein sequence, read N- to C-terminus: ATP synthase subunit a (248 aa).

Transmembrane regions (helical) follow at residues 31 to 51, 90 to 110, 129 to 149, 195 to 215, and 216 to 236; these read GQVLIASWIAIALILTVVLLG, VPYVGTLFLFIFVSNWMGNLF, INTTAGLALLTSVMYFVAGIS, VIAVLVLLVPLLIPVPVMILF, and LFTGAIQALIFSTLSAAYIGE.

It belongs to the ATPase A chain family. F-type ATPases have 2 components, CF(1) - the catalytic core - and CF(0) - the membrane proton channel. CF(1) has five subunits: alpha(3), beta(3), gamma(1), delta(1), epsilon(1). CF(0) has four main subunits: a, b, b' and c.

It localises to the cellular thylakoid membrane. Its function is as follows. Key component of the proton channel; it plays a direct role in the translocation of protons across the membrane. The sequence is that of ATP synthase subunit a from Synechococcus sp. (strain JA-3-3Ab) (Cyanobacteria bacterium Yellowstone A-Prime).